The primary structure comprises 459 residues: MVKRYAVILAAGQGTRMKSKLYKVLHPVCGKPMVQHVVDQVSKLGVEKTIAVVGFGAEQVKEQLGAQCEYALQEKQLGTAHAVMQAAPHLQNLEGITIVVCGDTPLITAETMEALLEHHMTAGAKATVLTAIADDPTGYGRIVRNSDGHVEKIVEHKDANEQEREIREINTGTYCFDNRMLFQALTKVTNNNAQGEYYLTDVIEIIKADGGIVSAYQAPSFDETIGINDRIALAEAERIMRDRICRQHMKNGVTIIDPACTYISAEATIGRDTVIYPGTVIEGKTVIGEDCTIGPHSEIKNCHIGHRTSIRHSVAHDSEIGDDVTIGPFAHIRPLSKIDDEVRIGNFVEVKKSTFGKGSKASHLSYIGDAEVGADVNLGCGSITVNYDGVHKYRTKIEDGAFIGCNANLIAPVTIGQGAYVAAGSTVTDDVPGRALAIGRARQVNKENYVDRLRGKKKS.

A pyrophosphorylase region spans residues 1-230; sequence MVKRYAVILA…FDETIGINDR (230 aa). UDP-N-acetyl-alpha-D-glucosamine-binding positions include 9–12, K23, Q73, and 78–79; these read LAAG and GT. Residue D103 participates in Mg(2+) binding. Positions 140, 155, 170, and 228 each coordinate UDP-N-acetyl-alpha-D-glucosamine. N228 is a binding site for Mg(2+). The linker stretch occupies residues 231 to 251; that stretch reads IALAEAERIMRDRICRQHMKN. An N-acetyltransferase region spans residues 252–459; it reads GVTIIDPACT…VDRLRGKKKS (208 aa). Positions 333 and 351 each coordinate UDP-N-acetyl-alpha-D-glucosamine. The active-site Proton acceptor is the H363. 2 residues coordinate UDP-N-acetyl-alpha-D-glucosamine: Y366 and N377. Residues 386–387, A423, and R440 contribute to the acetyl-CoA site; that span reads NY.

The protein in the N-terminal section; belongs to the N-acetylglucosamine-1-phosphate uridyltransferase family. It in the C-terminal section; belongs to the transferase hexapeptide repeat family. As to quaternary structure, homotrimer. It depends on Mg(2+) as a cofactor.

Its subcellular location is the cytoplasm. It carries out the reaction alpha-D-glucosamine 1-phosphate + acetyl-CoA = N-acetyl-alpha-D-glucosamine 1-phosphate + CoA + H(+). The enzyme catalyses N-acetyl-alpha-D-glucosamine 1-phosphate + UTP + H(+) = UDP-N-acetyl-alpha-D-glucosamine + diphosphate. It functions in the pathway nucleotide-sugar biosynthesis; UDP-N-acetyl-alpha-D-glucosamine biosynthesis; N-acetyl-alpha-D-glucosamine 1-phosphate from alpha-D-glucosamine 6-phosphate (route II): step 2/2. The protein operates within nucleotide-sugar biosynthesis; UDP-N-acetyl-alpha-D-glucosamine biosynthesis; UDP-N-acetyl-alpha-D-glucosamine from N-acetyl-alpha-D-glucosamine 1-phosphate: step 1/1. Its pathway is bacterial outer membrane biogenesis; LPS lipid A biosynthesis. Catalyzes the last two sequential reactions in the de novo biosynthetic pathway for UDP-N-acetylglucosamine (UDP-GlcNAc). The C-terminal domain catalyzes the transfer of acetyl group from acetyl coenzyme A to glucosamine-1-phosphate (GlcN-1-P) to produce N-acetylglucosamine-1-phosphate (GlcNAc-1-P), which is converted into UDP-GlcNAc by the transfer of uridine 5-monophosphate (from uridine 5-triphosphate), a reaction catalyzed by the N-terminal domain. The protein is Bifunctional protein GlmU of Geobacillus thermodenitrificans (strain NG80-2).